The primary structure comprises 294 residues: Ankyrin repeat and SOCS box protein 9 (294 aa).

Methionine 1 is subject to N-acetylmethionine. 6 ANK repeats span residues 35-64 (SDWS…AVNI), 68-97 (DHVS…QVNG), 101-130 (DWHT…SVQP), 133-162 (DLAS…NIDH), 166-195 (HLGT…DVNQ), and 198-227 (GQDS…DTQA). Serine 51 carries the phosphoserine modification. Positions 240–294 (PPESPLAQLFLEREGPPSLMQLCRLRIRKCFGIQQHHKITKLVLPEDLKQFLLHL) constitute an SOCS box domain.

This sequence belongs to the ankyrin SOCS box (ASB) family. As to quaternary structure, substrate-recognition component of the ECS(ASB9) complex, composed of ASB9, CUL5, ELOB, ELOC and RNF7/RBX2. As to expression, predominantly expressed in testis, kidney, and liver.

It localises to the mitochondrion. It functions in the pathway protein modification; protein ubiquitination. In terms of biological role, substrate-recognition component of a cullin-5-RING E3 ubiquitin-protein ligase complex (ECS complex, also named CRL5 complex), which mediates the ubiquitination and subsequent proteasomal degradation of target proteins. The ECS(ASB9) complex catalyzes ubiquitination of creatine kinases CKB and CKMT1A. Functionally, does not interact with the Elongin BC complex, likely to be a negative regulator of isoform 1. The protein is Ankyrin repeat and SOCS box protein 9 of Homo sapiens (Human).